We begin with the raw amino-acid sequence, 180 residues long: Riboflavin kinase (180 aa).

Positions 40 and 42 each coordinate Mg(2+). Glu117 (nucleophile) is an active-site residue.

The protein belongs to the flavokinase family. Zn(2+) is required as a cofactor. Mg(2+) serves as cofactor.

The enzyme catalyses riboflavin + ATP = FMN + ADP + H(+). It participates in cofactor biosynthesis; FMN biosynthesis; FMN from riboflavin (ATP route): step 1/1. Functionally, catalyzes the phosphorylation of riboflavin (vitamin B2) to form flavin mononucleotide (FMN) coenzyme. The chain is Riboflavin kinase (FMN1) from Meyerozyma guilliermondii (strain ATCC 6260 / CBS 566 / DSM 6381 / JCM 1539 / NBRC 10279 / NRRL Y-324) (Yeast).